The following is a 110-amino-acid chain: Cytochrome c6 (110 aa).

The signal sequence occupies residues 1-25 (MKKLVSSVILALILFGFSWVSPAFA). 4 residues coordinate heme c: Cys-39, Cys-42, His-43, and Met-83.

This sequence belongs to the cytochrome c family. PetJ subfamily. In terms of assembly, monomer. In terms of processing, binds 1 heme c group covalently per subunit.

It is found in the cellular thylakoid lumen. Functionally, functions as an electron carrier between membrane-bound cytochrome b6-f and photosystem I in oxygenic photosynthesis. This chain is Cytochrome c6, found in Gloeothece citriformis (strain PCC 7424) (Cyanothece sp. (strain PCC 7424)).